A 229-amino-acid chain; its full sequence is Peroxiredoxin 1 (229 aa).

Residues 33–192 (LGPKNKAPDF…AFRTLKAFQF (160 aa)) form the Thioredoxin domain. The active-site Cysteine sulfenic acid (-SOH) intermediate is Cys78.

Belongs to the peroxiredoxin family. AhpC/Prx1 subfamily. As to quaternary structure, homodimer; disulfide-linked, upon oxidation.

It catalyses the reaction a hydroperoxide + [thioredoxin]-dithiol = an alcohol + [thioredoxin]-disulfide + H2O. Its function is as follows. Thiol-specific peroxidase that catalyzes the reduction of hydrogen peroxide and organic hydroperoxides to water and alcohols, respectively. Plays a role in cell protection against oxidative stress by detoxifying peroxides and as sensor of hydrogen peroxide-mediated signaling events. This Brugia malayi (Filarial nematode worm) protein is Peroxiredoxin 1 (TSA1).